The primary structure comprises 299 residues: Zinc finger protein 414 (299 aa).

Polar residues-rich tracts occupy residues 1 to 20 (MEEP…SSSG) and 69 to 81 (DSCQ…TGVG). The interval 1–98 (MEEPSRPSSD…PRRRPPPGKQ (98 aa)) is disordered. 2 C2H2-type zinc fingers span residues 99–123 (IPCS…LRTH) and 135–159 (FRCS…GKLH). Residues 166 to 190 (FKCENCLLRFRTHRSLFKHLHVCID) form a C2H2-type 3; degenerate zinc finger. 2 disordered regions span residues 193–228 (QNPA…PFPL) and 254–299 (PRLR…GACR). The segment covering 203–215 (LDKEPPVPERPPE) has biased composition (basic and acidic residues). Residues 217 to 228 (DPSSSLGLPFPL) are compositionally biased toward low complexity.

Belongs to the krueppel C2H2-type zinc-finger protein family.

The protein localises to the nucleus. Functionally, may be involved in transcriptional regulation. This Mus musculus (Mouse) protein is Zinc finger protein 414 (Znf414).